The chain runs to 494 residues: 4-trimethylaminobutyraldehyde dehydrogenase (494 aa).

Serine 2 is subject to N-acetylserine. Lysine 30 bears the N6-acetyllysine; alternate mark. At lysine 30 the chain carries N6-succinyllysine; alternate. Lysine 59 bears the N6-succinyllysine mark. NAD(+) contacts are provided by residues lysine 180 and 232-236; that span reads GSVPT. Glutamate 254 acts as the Proton acceptor in catalysis. Cysteine 288 (nucleophile) is an active-site residue. Lysine 298 carries the N6-acetyllysine modification. Position 391 (glutamate 391) interacts with NAD(+).

Belongs to the aldehyde dehydrogenase family. In terms of assembly, homotetramer. In terms of tissue distribution, detected in lever (at protein level).

It localises to the cytoplasm. Its subcellular location is the cytosol. The catalysed reaction is 4-(trimethylamino)butanal + NAD(+) + H2O = 4-(trimethylamino)butanoate + NADH + 2 H(+). It carries out the reaction an aldehyde + NAD(+) + H2O = a carboxylate + NADH + 2 H(+). The enzyme catalyses 4-aminobutanal + NAD(+) + H2O = 4-aminobutanoate + NADH + 2 H(+). It catalyses the reaction formaldehyde + NAD(+) + H2O = formate + NADH + 2 H(+). The catalysed reaction is acetaldehyde + NAD(+) + H2O = acetate + NADH + 2 H(+). It carries out the reaction imidazole-4-acetaldehyde + NAD(+) + H2O = imidazole-4-acetate + NADH + 2 H(+). The enzyme catalyses acrolein + NAD(+) + H2O = acrylate + NADH + 2 H(+). It catalyses the reaction (5-hydroxyindol-3-yl)acetaldehyde + NAD(+) + H2O = (5-hydroxyindol-3-yl)acetate + NADH + 2 H(+). The catalysed reaction is 3,4-dihydroxyphenylacetaldehyde + NAD(+) + H2O = 3,4-dihydroxyphenylacetate + NADH + 2 H(+). It carries out the reaction spermine monoaldehyde + NAD(+) + H2O = N-(2-carboxyethyl)spermidine + NADH + 2 H(+). The enzyme catalyses propanal + NAD(+) + H2O = propanoate + NADH + 2 H(+). It catalyses the reaction butanal + NAD(+) + H2O = butanoate + NADH + 2 H(+). The catalysed reaction is pentanal + NAD(+) + H2O = pentanoate + NADH + 2 H(+). It carries out the reaction hexanal + NAD(+) + H2O = hexanoate + NADH + 2 H(+). It participates in amine and polyamine biosynthesis; carnitine biosynthesis. Converts gamma-trimethylaminobutyraldehyde into gamma-butyrobetaine with high efficiency (in vitro). Can catalyze the irreversible oxidation of a broad range of aldehydes to the corresponding acids in an NAD-dependent reaction, but with low efficiency. Catalyzes the oxidation of aldehydes arising from biogenic amines and polyamines. The polypeptide is 4-trimethylaminobutyraldehyde dehydrogenase (Aldh9a1) (Rattus norvegicus (Rat)).